We begin with the raw amino-acid sequence, 472 residues long: Chromosomal replication initiator protein DnaA (472 aa).

The segment at 1-73 (MSNMEQDRWS…LSCWQAELPE (73 aa)) is domain I, interacts with DnaA modulators. Residues 73-128 (EVNRVDLTVRSPVRCATPAKEVPAPVESRRDEQRPSAERSNGATPVSANHDALGGS) form a domain II region. The segment at 90-124 (PAKEVPAPVESRRDEQRPSAERSNGATPVSANHDA) is disordered. Positions 99-109 (ESRRDEQRPSA) are enriched in basic and acidic residues. The span at 110–119 (ERSNGATPVS) shows a compositional bias: polar residues. Residues 129–351 (PLDPRLTFAS…GAINRLLAHS (223 aa)) are domain III, AAA+ region. The ATP site is built by Gly-176, Gly-178, Lys-179, and Thr-180. The domain IV, binds dsDNA stretch occupies residues 352-472 (KLNNQPVTLE…VESLKRQLQE (121 aa)).

Belongs to the DnaA family. As to quaternary structure, oligomerizes as a right-handed, spiral filament on DNA at oriC.

Its subcellular location is the cytoplasm. Plays an essential role in the initiation and regulation of chromosomal replication. ATP-DnaA binds to the origin of replication (oriC) to initiate formation of the DNA replication initiation complex once per cell cycle. Binds the DnaA box (a 9 base pair repeat at the origin) and separates the double-stranded (ds)DNA. Forms a right-handed helical filament on oriC DNA; dsDNA binds to the exterior of the filament while single-stranded (ss)DNA is stabiized in the filament's interior. The ATP-DnaA-oriC complex binds and stabilizes one strand of the AT-rich DNA unwinding element (DUE), permitting loading of DNA polymerase. After initiation quickly degrades to an ADP-DnaA complex that is not apt for DNA replication. Binds acidic phospholipids. This is Chromosomal replication initiator protein DnaA from Rhodopseudomonas palustris (strain ATCC BAA-98 / CGA009).